Consider the following 706-residue polypeptide: UvrABC system protein C (706 aa).

In terms of domain architecture, GIY-YIG spans V16–V95. Positions D208–A243 constitute a UVR domain. Positions A651 to V706 are disordered. Residues T692–V706 show a composition bias toward polar residues.

Belongs to the UvrC family. In terms of assembly, interacts with UvrB in an incision complex.

It localises to the cytoplasm. Its function is as follows. The UvrABC repair system catalyzes the recognition and processing of DNA lesions. UvrC both incises the 5' and 3' sides of the lesion. The N-terminal half is responsible for the 3' incision and the C-terminal half is responsible for the 5' incision. In Mycolicibacterium smegmatis (strain ATCC 700084 / mc(2)155) (Mycobacterium smegmatis), this protein is UvrABC system protein C.